Reading from the N-terminus, the 663-residue chain is MGVLLPIFFGVLLLFTVTPPSMSQLPPTIMVPAPAPAPISPSDLCNGIFLSYDFILGRKIPPNDTADQPYRFESVLTVLNNGREELKEWRVFVGFQHNEILISATDALIVNGTELPALVGNGTIFGGYPVSDLKTAIQTAGDLKQMTAEIELVGTQFMVAPPAVPLPSNISLVNEGWLCPVPTLQSKRELTTCCIRDASIIVNTTITTKFLPRQPGDLTIMYDVIRAYDQNYLTEVTMENHNPLGRLDHWELSFDWMRDEFIQKMQGAYPTVVDATKCIFGPQSLIYTGLDFADVLTCERRPIIIDLPPTKKDDSTLGNIPSCCRNGTILPRIMDPSKSVSVFTMQVAKMPPDFNRSALFPPQNWRIKGTLNPDYSCGPPVRVTPTFYPDPSGMPTNKSSFASWQIVCNITQAKTEIPKCCVSFSAFFNDSIIPCNTCACGCVSETRRTCSAETPSLLIPPDALLLPFENRTALTLAWNALKHKTLPNPMPCGDNCGVSINWHMASDYRGGWTVRITIFNWGEIDFPNWFLAVQMKKPALLGFEKAYSFNASLLSVDGGVNNTIFMEGLPGLDYLVAEADEKDPKKKNIRIPGKQQSVIQFSKKLTPGINVAERDGFPAKVIFNGEECLLPDLLPMASGGRRNGAITVLSFITFYVAAFMVLL.

A signal peptide spans 1–23; it reads MGVLLPIFFGVLLLFTVTPPSMS. N-linked (GlcNAc...) asparagine glycosylation is found at asparagine 63, asparagine 111, asparagine 121, asparagine 169, asparagine 203, asparagine 326, asparagine 355, asparagine 397, asparagine 409, asparagine 429, asparagine 470, asparagine 550, and asparagine 561. Serine 638 is lipidated: GPI-anchor amidated serine. Residues 639–663 constitute a propeptide, removed in mature form; sequence GGRRNGAITVLSFITFYVAAFMVLL.

It belongs to the COBRA family. As to expression, expressed only in flowers.

It localises to the cell membrane. In Arabidopsis thaliana (Mouse-ear cress), this protein is COBRA-like protein 9 (COBL9).